Reading from the N-terminus, the 94-residue chain is C-C motif chemokine 17 (94 aa).

Residues 1–23 (MAPLKMLALVTLLLGASLQHIHA) form the signal peptide. 2 cysteine pairs are disulfide-bonded: Cys33-Cys57 and Cys34-Cys73.

Belongs to the intercrine beta (chemokine CC) family. Constitutively expressed in thymus. Detected at lower levels in the lung, colon and small intestine. Expressed in stimulated peripheral blood mononuclear cells, but not in resting cells.

Its subcellular location is the secreted. Its function is as follows. Chemokine, which displays chemotactic activity for T lymphocytes, preferentially Th2 cells, but not monocytes or granulocytes. Therefore plays an important role in a wide range of inflammatory and immunological processes. Acts by binding to CCR4 at T-cell surface. Mediates GM-CSF/CSF2-driven pain and inflammation. In the brain, required to maintain the typical, highly branched morphology of hippocampal microglia under homeostatic conditions. May be important for the appropriate adaptation of microglial morphology and synaptic plasticity to acute lipopolysaccharide (LPS)-induced neuroinflammation. Plays a role in wound healing, mainly by inducing fibroblast migration into the wound. The polypeptide is C-C motif chemokine 17 (CCL17) (Homo sapiens (Human)).